Here is a 239-residue protein sequence, read N- to C-terminus: Ribonuclease HII (239 aa).

The RNase H type-2 domain occupies 18–231; the sequence is KIIVGLDEAG…SKNLLKEIEE (214 aa). The a divalent metal cation site is built by aspartate 24, glutamate 25, and aspartate 125.

It belongs to the RNase HII family. The cofactor is Mn(2+). Mg(2+) serves as cofactor.

The protein resides in the cytoplasm. It carries out the reaction Endonucleolytic cleavage to 5'-phosphomonoester.. Its function is as follows. Endonuclease that specifically degrades the RNA of RNA-DNA hybrids. The sequence is that of Ribonuclease HII from Methanococcus maripaludis (strain C5 / ATCC BAA-1333).